A 320-amino-acid chain; its full sequence is Aspartate carbamoyltransferase catalytic subunit (320 aa).

Positions 53 and 54 each coordinate carbamoyl phosphate. Residue Lys82 coordinates L-aspartate. Carbamoyl phosphate is bound by residues Arg103, His131, and Gln134. The L-aspartate site is built by Arg164 and Arg227. Carbamoyl phosphate contacts are provided by Leu266 and Pro267.

This sequence belongs to the aspartate/ornithine carbamoyltransferase superfamily. ATCase family. Heterododecamer (2C3:3R2) of six catalytic PyrB chains organized as two trimers (C3), and six regulatory PyrI chains organized as three dimers (R2).

The enzyme catalyses carbamoyl phosphate + L-aspartate = N-carbamoyl-L-aspartate + phosphate + H(+). The protein operates within pyrimidine metabolism; UMP biosynthesis via de novo pathway; (S)-dihydroorotate from bicarbonate: step 2/3. Catalyzes the condensation of carbamoyl phosphate and aspartate to form carbamoyl aspartate and inorganic phosphate, the committed step in the de novo pyrimidine nucleotide biosynthesis pathway. This is Aspartate carbamoyltransferase catalytic subunit from Bifidobacterium longum subsp. infantis (strain ATCC 15697 / DSM 20088 / JCM 1222 / NCTC 11817 / S12).